The following is a 132-amino-acid chain: Subtelomeric hrmA-associated cluster protein AFUB_079000 (132 aa).

Part of the subtelomeric hrmA-associated cluster (HAC) containing genes that alter the hyphal surface (such as reduced total chitin or increased beta-glucan exposure) and perturb inter-hyphal interactions within the developing biofilms, resulting in a loss of vertically aligned polarized growing filaments. Consequently, this hypoxia-typic morphotype (called H-MORPH) with altered biofilm architecture leads to increased hypoxia fitness, increased host inflammation, rapid disease progression, and mortality in a murine model of invasive aspergillosis. The protein is Subtelomeric hrmA-associated cluster protein AFUB_079000 of Aspergillus fumigatus (strain CBS 144.89 / FGSC A1163 / CEA10) (Neosartorya fumigata).